The chain runs to 177 residues: UPF0114 protein HP_0189 (177 aa).

The next 3 helical transmembrane spans lie at 15-35 (WLLA…GYVF), 54-74 (LVLS…VLMV), and 145-165 (PIFW…LAAV).

It belongs to the UPF0114 family.

The protein localises to the cell membrane. The protein is UPF0114 protein HP_0189 of Helicobacter pylori (strain ATCC 700392 / 26695) (Campylobacter pylori).